Consider the following 414-residue polypeptide: Voltage-gated ClC-type chloride channel ClcB (414 aa).

The next 11 helical transmembrane spans lie at 5-25 (LVISIMLGMVSALIVWLFHQA), 54-74 (ALTPALGGLAAGLLLWAYQRY), 116-136 (SAIGREGAMVLLAALFASVFA), 147-167 (LWVACGAAAGMASAYHAPLAG), 169-189 (LFIAEILFGTLMLASLGPVVI), 220-240 (VQYFLMALLGLMAGFSGPLFL), 255-275 (LLPPLQLALGGIIVGLLSLIF), 292-312 (TPPGVLLIGGILICKLLAVLA), 327-347 (LFVGAALGMLCGQIFSLWPVL), 353-373 (LLMALTGMATLLAATTHAPIM), and 381-401 (MTGEYTLLPGLLLSCVIATTI).

Belongs to the chloride channel (TC 2.A.49) family. ClcB subfamily.

It localises to the cell inner membrane. Functionally, probably acts as an electrical shunt for an outwardly-directed proton pump that is linked to amino acid decarboxylation, as part of the extreme acid resistance (XAR) response. The chain is Voltage-gated ClC-type chloride channel ClcB from Yersinia pseudotuberculosis serotype O:1b (strain IP 31758).